A 242-amino-acid chain; its full sequence is Glucosamine-6-phosphate deaminase (242 aa).

Residue D67 is the Proton acceptor; for enolization step of the active site. The active-site For ring-opening step is the N136. H138 acts as the Proton acceptor; for ring-opening step in catalysis. Catalysis depends on E143, which acts as the For ring-opening step.

It belongs to the glucosamine/galactosamine-6-phosphate isomerase family. NagB subfamily.

It carries out the reaction alpha-D-glucosamine 6-phosphate + H2O = beta-D-fructose 6-phosphate + NH4(+). Its pathway is amino-sugar metabolism; N-acetylneuraminate degradation; D-fructose 6-phosphate from N-acetylneuraminate: step 5/5. Its function is as follows. Catalyzes the reversible isomerization-deamination of glucosamine 6-phosphate (GlcN6P) to form fructose 6-phosphate (Fru6P) and ammonium ion. This is Glucosamine-6-phosphate deaminase from Clostridium perfringens (strain ATCC 13124 / DSM 756 / JCM 1290 / NCIMB 6125 / NCTC 8237 / Type A).